Here is a 151-residue protein sequence, read N- to C-terminus: Small ribosomal subunit protein uS15 (151 aa).

K27 carries the N6-acetyllysine; alternate modification. N6-succinyllysine; alternate is present on K27. A Glycyl lysine isopeptide (Lys-Gly) (interchain with G-Cter in ubiquitin) cross-link involves residue K27. The residue at position 30 (S30) is a Phosphoserine. K34 carries the post-translational modification N6-succinyllysine. At Y38 the chain carries Phosphotyrosine. K43 participates in a covalent cross-link: Glycyl lysine isopeptide (Lys-Gly) (interchain with G-Cter in SUMO2).

This sequence belongs to the universal ribosomal protein uS15 family. Component of the small ribosomal subunit. Part of the small subunit (SSU) processome, composed of more than 70 proteins and the RNA chaperone small nucleolar RNA (snoRNA) U3. In terms of processing, ubiquitinated at Lys-27 by RNF14 and RNF25 in response to ribosome collisions (ribosome stalling).

The protein localises to the cytoplasm. The protein resides in the nucleus. It is found in the nucleolus. Its function is as follows. Component of the small ribosomal subunit. The ribosome is a large ribonucleoprotein complex responsible for the synthesis of proteins in the cell. Part of the small subunit (SSU) processome, first precursor of the small eukaryotic ribosomal subunit. During the assembly of the SSU processome in the nucleolus, many ribosome biogenesis factors, an RNA chaperone and ribosomal proteins associate with the nascent pre-rRNA and work in concert to generate RNA folding, modifications, rearrangements and cleavage as well as targeted degradation of pre-ribosomal RNA by the RNA exosome. This Cricetulus griseus (Chinese hamster) protein is Small ribosomal subunit protein uS15 (RPS13).